We begin with the raw amino-acid sequence, 352 residues long: MTIAVGRAPAGRGWFDVLDDWLKRDRFVFVGWSGLLLFPCAYMALGGWLTGTTFVTSWYTHGIASSYLEGCNFLTAAVSTPADSMGHSLLLLWGPEAQGDFVRWCQLGGLWAFVALHGAFGLIGFMLRQFEIARLVGIRPYNAIAFSGPIAVFVSVFLMYPLGQSSWFFAPSFGVAAIFRFLLFLQGFHNWTLNPFHMMGVAGILGGALLCAIHGATVENTLFEDGDGANTFKAFEPTQEEETYSMVTANRFWSQIFGIAFSNKRWLHFFMLFVPVMGLWTSSIGIIGLALNLRAYDFVSQELRAAEDPEFETFYTKNILLNEGLRAWMAPADQPHENFIFPEEVLPRGNAL.

The helical transmembrane segment at 40–60 threads the bilayer; that stretch reads CAYMALGGWLTGTTFVTSWYT. H117 contacts chlorophyll a. Residues 124–140 traverse the membrane as a helical segment; that stretch reads GFMLRQFEIARLVGIRP. Q129 and N142 together coordinate pheophytin a. A helical transmembrane segment spans residues 152-165; it reads VFVSVFLMYPLGQS. H197 is a binding site for chlorophyll a. A helical membrane pass occupies residues 207-227; the sequence is GALLCAIHGATVENTLFEDGD. Positions 214 and 261 each coordinate a plastoquinone. H214 lines the Fe cation pocket. H268 contacts Fe cation. Residues 278 to 294 form a helical membrane-spanning segment; that stretch reads GLWTSSIGIIGLALNLR.

It belongs to the reaction center PufL/M/PsbA/D family. PSII is composed of 1 copy each of membrane proteins PsbA, PsbB, PsbC, PsbD, PsbE, PsbF, PsbH, PsbI, PsbJ, PsbK, PsbL, PsbM, PsbT, PsbX, PsbY, PsbZ, Psb30/Ycf12, peripheral proteins PsbO, CyanoQ (PsbQ), PsbU, PsbV and a large number of cofactors. It forms dimeric complexes. The D1/D2 heterodimer binds P680, chlorophylls that are the primary electron donor of PSII, and subsequent electron acceptors. It shares a non-heme iron and each subunit binds pheophytin, quinone, additional chlorophylls, carotenoids and lipids. There is also a Cl(-1) ion associated with D1 and D2, which is required for oxygen evolution. The PSII complex binds additional chlorophylls, carotenoids and specific lipids. serves as cofactor.

It is found in the cellular thylakoid membrane. It carries out the reaction 2 a plastoquinone + 4 hnu + 2 H2O = 2 a plastoquinol + O2. Functionally, photosystem II (PSII) is a light-driven water:plastoquinone oxidoreductase that uses light energy to abstract electrons from H(2)O, generating O(2) and a proton gradient subsequently used for ATP formation. It consists of a core antenna complex that captures photons, and an electron transfer chain that converts photonic excitation into a charge separation. The D1/D2 (PsbA/PsbD) reaction center heterodimer binds P680, the primary electron donor of PSII as well as several subsequent electron acceptors. D2 is needed for assembly of a stable PSII complex. The sequence is that of Photosystem II D2 protein from Synechococcus sp. (strain RCC307).